A 77-amino-acid chain; its full sequence is Neurotoxin LmNaTx21.1 (77 aa).

The first 7 residues, 1–7 (LILVACL), serve as a signal peptide directing secretion. Positions 16–76 (KDGYPVDWNN…VEIKGYGRCR (61 aa)) constitute an LCN-type CS-alpha/beta domain. 4 disulfides stabilise this stretch: cysteine 26–cysteine 75, cysteine 30–cysteine 51, cysteine 37–cysteine 58, and cysteine 41–cysteine 60.

This sequence belongs to the long (4 C-C) scorpion toxin superfamily. Sodium channel inhibitor family. Alpha subfamily. Expressed by the venom gland.

It is found in the secreted. Functionally, binds voltage-independently at site-3 of voltage-gated sodium channels (Nav) and inhibits the inactivation of the activated channels, thereby blocking neuronal transmission. The sequence is that of Neurotoxin LmNaTx21.1 from Lychas mucronatus (Chinese swimming scorpion).